A 377-amino-acid polypeptide reads, in one-letter code: Probable dehydratase NIT22 (377 aa).

2 residues coordinate NADP(+): K101 and R196. The segment at 220–243 is disordered; sequence ERGPKMNEHVPSTPPRRPDAVSSF. The MaoC-like domain occupies 233–332; the sequence is PPRRPDAVSS…ILMWDMGLCK (100 aa). NADP(+)-binding residues include T265 and I287.

Belongs to the short-chain dehydrogenases/reductases (SDR) family.

The protein operates within siderophore biosynthesis. Functionally, probable dehydratase; part of the gene cluster that mediates the biosynthesis of hydroxamate-containing siderophores that play a critical role in virulence via intracellular iron acquisition during macrophage infection. This Ajellomyces capsulatus (Darling's disease fungus) protein is Probable dehydratase NIT22.